Reading from the N-terminus, the 1125-residue chain is Protein efr-3 (1125 aa).

Disordered stretches follow at residues 240–261 (RTSN…PNPI), 471–493 (RPSR…NGAA), 788–819 (TSPP…KDET), and 845–1093 (QAGS…LGEK). Residues 242 to 252 (SNATAQPSETT) are compositionally biased toward polar residues. The span at 788–798 (TSPPTSPTTSP) shows a compositional bias: low complexity. The span at 845–854 (QAGSSQTASL) shows a compositional bias: polar residues. Residues 855–877 (NGTNGTHRNTVNNNNRLGVNGVT) are compositionally biased toward low complexity. 3 stretches are compositionally biased toward polar residues: residues 878–896 (SPNG…TGPN), 975–1011 (LSFN…TQQL), and 1046–1071 (SRTT…TSSK).

This sequence belongs to the EFR3 family.

The protein is Protein efr-3 (efr-3) of Neurospora crassa (strain ATCC 24698 / 74-OR23-1A / CBS 708.71 / DSM 1257 / FGSC 987).